The following is a 199-amino-acid chain: Nucleoid occlusion factor SlmA (199 aa).

The HTH tetR-type domain maps to 11–71 (ERRQQVLTVL…ALIDNLEAHL (61 aa)). The segment at residues 34–53 (TTARIAAEVGVSEAALYRYY) is a DNA-binding region (H-T-H motif).

This sequence belongs to the nucleoid occlusion factor SlmA family. Homodimer. Interacts with FtsZ.

The protein resides in the cytoplasm. The protein localises to the nucleoid. Required for nucleoid occlusion (NO) phenomenon, which prevents Z-ring formation and cell division over the nucleoid. Acts as a DNA-associated cell division inhibitor that binds simultaneously chromosomal DNA and FtsZ, and disrupts the assembly of FtsZ polymers. SlmA-DNA-binding sequences (SBS) are dispersed on non-Ter regions of the chromosome, preventing FtsZ polymerization at these regions. In Pasteurella multocida (strain Pm70), this protein is Nucleoid occlusion factor SlmA.